Here is a 118-residue protein sequence, read N- to C-terminus: Protein LH1 (118 aa).

The chain is Protein LH1 from Snake adenovirus serotype 1 (SnAdV-1).